The chain runs to 549 residues: Cytochrome c oxidase subunit 1 homolog, bacteroid (549 aa).

The next 3 membrane-spanning stretches (helical) occupy residues 12–32, 39–59, and 87–107; these read IGES…VIAA, PFAF…FCIV, and FSSF…LIIA. Residue histidine 131 coordinates heme b. The next 8 helical transmembrane spans lie at 132–152, 168–188, 201–221, 228–248, 279–299, 312–332, 344–364, and 382–402; these read TSAV…FYVV, FVVV…LLGV, ADLW…ATII, IFVA…LHLG, GHNA…YYFI, LSII…PHHL, LGMT…INGL, and MLVV…MMSI. Cu cation-binding residues include histidine 280, histidine 330, and histidine 331. Residues histidine 418 and histidine 420 each contribute to the heme b site. Transmembrane regions (helical) follow at residues 423–443, 458–478, and 512–532; these read ALGW…PWAW, FWVA…SGIL, and AGGG…WMTV.

Belongs to the heme-copper respiratory oxidase family. The cofactor is Cu(2+). It depends on heme b as a cofactor.

Its subcellular location is the cell membrane. The enzyme catalyses 4 Fe(II)-[cytochrome c] + O2 + 8 H(+)(in) = 4 Fe(III)-[cytochrome c] + 2 H2O + 4 H(+)(out). Its pathway is energy metabolism; oxidative phosphorylation. Cytochrome c oxidase is the component of the respiratory chain that catalyzes the reduction of oxygen to water. Subunits 1-3 form the functional core of the enzyme complex. Co I is the catalytic subunit of the enzyme. Electrons originating in cytochrome c or a quinol are transferred to the bimetallic center formed by a high-spin heme and copper B. The chain is Cytochrome c oxidase subunit 1 homolog, bacteroid (fixN) from Bradyrhizobium diazoefficiens (strain JCM 10833 / BCRC 13528 / IAM 13628 / NBRC 14792 / USDA 110).